We begin with the raw amino-acid sequence, 412 residues long: Histidine--tRNA ligase (412 aa).

Belongs to the class-II aminoacyl-tRNA synthetase family. In terms of assembly, homodimer.

Its subcellular location is the cytoplasm. It catalyses the reaction tRNA(His) + L-histidine + ATP = L-histidyl-tRNA(His) + AMP + diphosphate + H(+). This is Histidine--tRNA ligase from Rickettsia typhi (strain ATCC VR-144 / Wilmington).